Reading from the N-terminus, the 366-residue chain is D-alanine--D-alanine ligase A (366 aa).

Residues 145–348 form the ATP-grasp domain; that stretch reads KRLLRDAGLK…YRELITALIE (204 aa). 175–230 is a binding site for ATP; the sequence is VEQLGLPLFVKPANQGSSVGVSKVKREADLRAALDEAFRYDHKVLVEQAVIGREIE. Mg(2+) is bound by residues D302, E315, and N317.

The protein belongs to the D-alanine--D-alanine ligase family. Mg(2+) is required as a cofactor. The cofactor is Mn(2+).

Its subcellular location is the cytoplasm. The catalysed reaction is 2 D-alanine + ATP = D-alanyl-D-alanine + ADP + phosphate + H(+). The protein operates within cell wall biogenesis; peptidoglycan biosynthesis. Functionally, cell wall formation. The chain is D-alanine--D-alanine ligase A from Chromobacterium violaceum (strain ATCC 12472 / DSM 30191 / JCM 1249 / CCUG 213 / NBRC 12614 / NCIMB 9131 / NCTC 9757 / MK).